Reading from the N-terminus, the 299-residue chain is Non-structural protein V (299 aa).

The interval 40-91 (SDNPGQERATYKEEKAGGSGLSKPCLSAIGSTEGGAPRIRGQGSGESDDDTE) is disordered. The tract at residues 110-120 (HYVYDHSGEAV) is interaction with host STAT1. Positions 133–163 (SGLDGDSTLSEGDNESENSDVDIGEPDTEGY) are disordered. Acidic residues predominate over residues 144–160 (GDNESENSDVDIGEPDT). Residues H232, C251, C255, C267, C269, C272, C276, and C279 each contribute to the Zn(2+) site.

This sequence belongs to the paramyxoviruses V protein family. Interacts with host IFIH1/MDA5 and DHX58/LGP2; these interactions are involved in the inhibition of the host type I interferon signaling pathway. Interacts with host TYK2; this interaction inhibits the type I interferon signaling pathway without affecting the type II pathway. Interacts with host IRF7; this interaction inhibits IRF7 translocation to the nucleus. Interacts with host CHUK. Interacts with host RELA/p65; this interaction inhibits the nuclear translocation of NF-KappaB. Interacts (via N-terminus) with host STAT1 and JAK1; these interactions inhibit STAT1 phosphorylation by Jak1 and thereby the type I interferon signaling pathway. Interacts (via C-terminus) with host STAT2; this interaction is involved in the inhibition of the host type I interferon signaling pathway. Forms a complex with host PPP1CA and PPP1CC; this interaction prevents dephosphorylation of host IFIH1/MDA5 and leads to the inhibition of the host type I interferon signaling pathway. Interacts with host IRF9; this interaction prevents the binding of IRF9 to STAT2 and thereby the type I interferon signaling pathway. Interacts with host RIGI regulatory protein (via CARDs domain) and host TRIM25 (via SPRY domain); these interactions prevent TRIM25-mediated ubiquitination of RIG-I and disrupts downstream RIG-I signaling.

It localises to the host cytoplasm. Functionally, plays an essential role in the inhibition of host immune response. Prevents the establishment of cellular antiviral state by blocking interferon-alpha/beta (IFN-alpha/beta) production and signaling pathway. Interacts with host IFIH1/MDA5 and DHX58/LGP2 to inhibit the transduction pathway involved in the activation of IFN-beta promoter, thus protecting the virus against cell antiviral state. Blocks the type I interferon signaling pathway by interacting with host TYK2 and thereby inhibiting downstream STAT1 and STAT2 phosphorylation. Blocks the type I interferon signaling pathway by disrupting the RIG-I signaling pathway. Moderately affects the type II interferon signaling. Prevents PP1alpha/gamma-mediated dephosphorylation of host IFIH1/MDA5 and thus blocks its activation. This Homo sapiens (Human) protein is Non-structural protein V (P/V).